The sequence spans 444 residues: Phosphoglucosamine mutase (444 aa).

Ser-104 (phosphoserine intermediate) is an active-site residue. The Mg(2+) site is built by Ser-104, Asp-243, Asp-245, and Asp-247. Ser-104 bears the Phosphoserine mark.

The protein belongs to the phosphohexose mutase family. Requires Mg(2+) as cofactor. In terms of processing, activated by phosphorylation.

The catalysed reaction is alpha-D-glucosamine 1-phosphate = D-glucosamine 6-phosphate. Catalyzes the conversion of glucosamine-6-phosphate to glucosamine-1-phosphate. The sequence is that of Phosphoglucosamine mutase from Neisseria meningitidis serogroup B (strain ATCC BAA-335 / MC58).